The chain runs to 119 residues: Large ribosomal subunit protein uL22 (119 aa).

This sequence belongs to the universal ribosomal protein uL22 family. Part of the 50S ribosomal subunit.

Functionally, this protein binds specifically to 23S rRNA; its binding is stimulated by other ribosomal proteins, e.g. L4, L17, and L20. It is important during the early stages of 50S assembly. It makes multiple contacts with different domains of the 23S rRNA in the assembled 50S subunit and ribosome. Its function is as follows. The globular domain of the protein is located near the polypeptide exit tunnel on the outside of the subunit, while an extended beta-hairpin is found that lines the wall of the exit tunnel in the center of the 70S ribosome. This is Large ribosomal subunit protein uL22 from Bifidobacterium longum (strain DJO10A).